We begin with the raw amino-acid sequence, 472 residues long: 3-isopropylmalate dehydratase large subunit (472 aa).

The [4Fe-4S] cluster site is built by Cys-347, Cys-407, and Cys-410.

Belongs to the aconitase/IPM isomerase family. LeuC type 1 subfamily. Heterodimer of LeuC and LeuD. Requires [4Fe-4S] cluster as cofactor.

The catalysed reaction is (2R,3S)-3-isopropylmalate = (2S)-2-isopropylmalate. Its pathway is amino-acid biosynthesis; L-leucine biosynthesis; L-leucine from 3-methyl-2-oxobutanoate: step 2/4. In terms of biological role, catalyzes the isomerization between 2-isopropylmalate and 3-isopropylmalate, via the formation of 2-isopropylmaleate. This Bacillus licheniformis (strain ATCC 14580 / DSM 13 / JCM 2505 / CCUG 7422 / NBRC 12200 / NCIMB 9375 / NCTC 10341 / NRRL NRS-1264 / Gibson 46) protein is 3-isopropylmalate dehydratase large subunit.